Reading from the N-terminus, the 146-residue chain is Hemoglobin subunit beta (146 aa).

An N-acetylvaline modification is found at Val-1. In terms of domain architecture, Globin spans 2 to 146 (HLTDAEKALV…VATALAHKYH (145 aa)). Phosphothreonine is present on Thr-12. Ser-44 is modified (phosphoserine). An N6-acetyllysine modification is found at Lys-59. His-63 serves as a coordination point for heme b. Position 82 is an N6-acetyllysine (Lys-82). Residue His-92 participates in heme b binding. Cys-93 carries the post-translational modification S-nitrosocysteine. Lys-144 carries the post-translational modification N6-acetyllysine.

The protein belongs to the globin family. As to quaternary structure, heterotetramer of two alpha chains and two beta chains. Red blood cells.

Involved in oxygen transport from the lung to the various peripheral tissues. This Peromyscus californicus (California mouse) protein is Hemoglobin subunit beta.